Here is a 71-residue protein sequence, read N- to C-terminus: Pro-glucagon (71 aa).

This sequence belongs to the glucagon family.

The protein resides in the secreted. Functionally, plays a key role in glucose metabolism and homeostasis. Regulates blood glucose by increasing gluconeogenesis and decreasing glycolysis. The sequence is that of Pro-glucagon (gcg) from Piaractus mesopotamicus (Small-scaled pacu).